A 468-amino-acid polypeptide reads, in one-letter code: Cysteine--tRNA ligase (468 aa).

Cys33 lines the Zn(2+) pocket. A 'HIGH' region motif is present at residues 35 to 45; the sequence is ATVQGLPHIGH. The Zn(2+) site is built by Cys211, His236, and Glu240. A 'KMSKS' region motif is present at residues 267–271; the sequence is KMSKS. Position 270 (Lys270) interacts with ATP.

It belongs to the class-I aminoacyl-tRNA synthetase family. As to quaternary structure, monomer. The cofactor is Zn(2+).

The protein resides in the cytoplasm. The catalysed reaction is tRNA(Cys) + L-cysteine + ATP = L-cysteinyl-tRNA(Cys) + AMP + diphosphate. The chain is Cysteine--tRNA ligase from Mycobacterium marinum (strain ATCC BAA-535 / M).